Here is a 312-residue protein sequence, read N- to C-terminus: Beta-ketoacyl-[acyl-carrier-protein] synthase III (312 aa).

Catalysis depends on residues Cys112 and His237. The ACP-binding stretch occupies residues 238–242 (QANIR). Asn267 is a catalytic residue.

It belongs to the thiolase-like superfamily. FabH family. Homodimer.

The protein resides in the cytoplasm. The catalysed reaction is (2S)-2-methylbutanoyl-CoA + malonyl-[ACP] + H(+) = (4S)-4-methyl-3-oxohexanoyl-[ACP] + CO2 + CoA. It carries out the reaction 2-methylpropanoyl-CoA + malonyl-[ACP] + H(+) = 4-methyl-3-oxopentanoyl-[ACP] + CO2 + CoA. The enzyme catalyses 3-methylbutanoyl-CoA + malonyl-[ACP] + H(+) = 5-methyl-3-oxohexanoyl-[ACP] + CO2 + CoA. It catalyses the reaction malonyl-[ACP] + acetyl-CoA + H(+) = 3-oxobutanoyl-[ACP] + CO2 + CoA. Its pathway is lipid metabolism; fatty acid biosynthesis. In terms of biological role, catalyzes the condensation reaction of fatty acid synthesis by the addition to an acyl acceptor of two carbons from malonyl-ACP. Catalyzes the first condensation reaction which initiates fatty acid synthesis and may therefore play a role in governing the total rate of fatty acid production. Possesses both acetoacetyl-ACP synthase and acetyl transacylase activities. Can use branched-chain acyl-CoAs, with a preference for 2-methylbutanoyl-CoA, the precursor of odd-numbered anteiso fatty acids, at 30 degrees Celsius, which is further increased at a low temperature. Shows weak activity with acetyl-CoA. This is Beta-ketoacyl-[acyl-carrier-protein] synthase III from Listeria monocytogenes serotype 1/2a (strain 10403S).